Reading from the N-terminus, the 448-residue chain is Exodeoxyribonuclease 7 large subunit (448 aa).

The protein belongs to the XseA family. Heterooligomer composed of large and small subunits.

It is found in the cytoplasm. The enzyme catalyses Exonucleolytic cleavage in either 5'- to 3'- or 3'- to 5'-direction to yield nucleoside 5'-phosphates.. In terms of biological role, bidirectionally degrades single-stranded DNA into large acid-insoluble oligonucleotides, which are then degraded further into small acid-soluble oligonucleotides. The sequence is that of Exodeoxyribonuclease 7 large subunit from Shewanella baltica (strain OS185).